The chain runs to 454 residues: Metacaspase-1A (454 aa).

Over residues 1-16 (MSYGYPGQGYGPGGGH) the composition is skewed to gly residues. Residues 1-129 (MSYGYPGQGY…GHQTRNQGSH (129 aa)) form a disordered region. Low complexity-rich tracts occupy residues 38 to 47 (YSNPGQGQYN), 59 to 80 (YHQQ…YPPQ), 88 to 101 (GQQQ…HSQR), and 109 to 120 (GYDIYGYPIGSG). Residues H244 and C300 contribute to the active site.

It belongs to the peptidase C14B family.

Involved in cell death (apoptosis). In Neurospora crassa (strain ATCC 24698 / 74-OR23-1A / CBS 708.71 / DSM 1257 / FGSC 987), this protein is Metacaspase-1A (casA).